We begin with the raw amino-acid sequence, 479 residues long: Ribulose bisphosphate carboxylase large chain (479 aa).

The propeptide occupies 1-2; it reads MS. Proline 3 bears the N-acetylproline mark. Lysine 14 bears the N6,N6,N6-trimethyllysine mark. Residues asparagine 123 and threonine 173 each coordinate substrate. The Proton acceptor role is filled by lysine 175. Lysine 177 contributes to the substrate binding site. Mg(2+) contacts are provided by lysine 201, aspartate 203, and glutamate 204. The residue at position 201 (lysine 201) is an N6-carboxylysine. Residue histidine 294 is the Proton acceptor of the active site. Residues arginine 295, histidine 327, and serine 379 each coordinate substrate.

Belongs to the RuBisCO large chain family. Type I subfamily. As to quaternary structure, heterohexadecamer of 8 large chains and 8 small chains. Mg(2+) serves as cofactor.

It localises to the plastid. The protein resides in the chloroplast. It carries out the reaction 2 (2R)-3-phosphoglycerate + 2 H(+) = D-ribulose 1,5-bisphosphate + CO2 + H2O. It catalyses the reaction D-ribulose 1,5-bisphosphate + O2 = 2-phosphoglycolate + (2R)-3-phosphoglycerate + 2 H(+). In terms of biological role, ruBisCO catalyzes two reactions: the carboxylation of D-ribulose 1,5-bisphosphate, the primary event in carbon dioxide fixation, as well as the oxidative fragmentation of the pentose substrate in the photorespiration process. Both reactions occur simultaneously and in competition at the same active site. In Jasminum nudiflorum (Winter jasmine), this protein is Ribulose bisphosphate carboxylase large chain.